The following is a 498-amino-acid chain: Glycerol kinase (498 aa).

Threonine 12 is an ADP binding site. ATP is bound by residues threonine 12, threonine 13, and serine 14. Threonine 12 serves as a coordination point for sn-glycerol 3-phosphate. Arginine 16 is a binding site for ADP. Sn-glycerol 3-phosphate contacts are provided by arginine 82, glutamate 83, tyrosine 134, and aspartate 243. The glycerol site is built by arginine 82, glutamate 83, tyrosine 134, aspartate 243, and glutamine 244. Threonine 265 and glycine 308 together coordinate ADP. ATP contacts are provided by threonine 265, glycine 308, glutamine 312, and glycine 409. Residues glycine 409 and asparagine 413 each contribute to the ADP site.

Belongs to the FGGY kinase family. As to quaternary structure, homotetramer and homodimer (in equilibrium).

The enzyme catalyses glycerol + ATP = sn-glycerol 3-phosphate + ADP + H(+). The protein operates within polyol metabolism; glycerol degradation via glycerol kinase pathway; sn-glycerol 3-phosphate from glycerol: step 1/1. Its activity is regulated as follows. Activated by phosphorylation and inhibited by fructose 1,6-bisphosphate (FBP). Key enzyme in the regulation of glycerol uptake and metabolism. Catalyzes the phosphorylation of glycerol to yield sn-glycerol 3-phosphate. The polypeptide is Glycerol kinase (Clostridium botulinum (strain 657 / Type Ba4)).